Here is a 407-residue protein sequence, read N- to C-terminus: uncharacterized protein (407 aa).

12 consecutive transmembrane segments (helical) span residues 22 to 42, 51 to 71, 101 to 121, 126 to 146, 154 to 174, 179 to 199, 227 to 247, 258 to 278, 286 to 306, 309 to 329, 347 to 367, and 369 to 389; these read IVSVVSFTFICYLTIGLPLAV, LGFSAIVAGAAISVQYFATLA, ALLLSAFAFARWPAASIGLLV, VLGIGESLVGTGAILWGIGRV, VISWNGIATYGALAIGAPVGV, ALIPAVLGMLVIALAALGYYL, GLGLALGSAGFGSIATFITLY, LSLTVFGTLFIGARLLFANTI, VAIVSFAFECAGLLMLWLAPV, VALVGAALTGFGFALIFPALG, AYSVFLDLSLGITGPLAGYVA, and AFGYPQVFLCAAVAAAAGVAL.

This sequence belongs to the major facilitator superfamily. YhhS family.

It localises to the cell inner membrane. This is an uncharacterized protein from Burkholderia mallei (strain NCTC 10229).